Reading from the N-terminus, the 302-residue chain is Probable E3 ubiquitin-protein ligase RZFP34 (302 aa).

The segment at 54–130 (EGIMQYGCAH…VRQVCISCGV (77 aa)) adopts a CHY-type zinc-finger fold. The Zn(2+) site is built by Cys61, His63, Cys74, Cys75, Cys81, Cys84, His85, His100, Cys112, Cys115, Cys125, Cys128, Cys137, Cys140, His153, Cys154, Cys157, Cys160, His170, Cys171, Cys174, Cys177, His186, and Cys188. Residues 132 to 196 (MGKYFCEVCK…ACVEGAMHHD (65 aa)) form a CTCHY-type zinc finger. The RING-type; atypical zinc-finger motif lies at 197 to 240 (CPICFEYLFESTNDVSVLPCGHTIHVKCLREMEEHCQFACPLCS).

It localises to the nucleus. The enzyme catalyses S-ubiquitinyl-[E2 ubiquitin-conjugating enzyme]-L-cysteine + [acceptor protein]-L-lysine = [E2 ubiquitin-conjugating enzyme]-L-cysteine + N(6)-ubiquitinyl-[acceptor protein]-L-lysine.. Its pathway is protein modification; protein ubiquitination. In terms of biological role, possesses transactivation activity in yeast cells. Involved in the regulation of stomatal aperture. May modulate the expression of genes that control stomata opening during heat shock or drought stress. The polypeptide is Probable E3 ubiquitin-protein ligase RZFP34 (Oryza sativa subsp. japonica (Rice)).